Reading from the N-terminus, the 968-residue chain is RNA polymerase-associated protein RapA (968 aa).

The Helicase ATP-binding domain maps to 164–334 (DVGRRHAPRV…FARLRLLDPN (171 aa)). ATP is bound at residue 177–184 (DEVGLGKT). The DEAH box motif lies at 280-283 (DEAH). In terms of domain architecture, Helicase C-terminal spans 490–685 (RVEWLMGYLT…ALKAQLEQGR (196 aa)).

This sequence belongs to the SNF2/RAD54 helicase family. RapA subfamily. In terms of assembly, interacts with the RNAP. Has a higher affinity for the core RNAP than for the holoenzyme. Its ATPase activity is stimulated by binding to RNAP.

Transcription regulator that activates transcription by stimulating RNA polymerase (RNAP) recycling in case of stress conditions such as supercoiled DNA or high salt concentrations. Probably acts by releasing the RNAP, when it is trapped or immobilized on tightly supercoiled DNA. Does not activate transcription on linear DNA. Probably not involved in DNA repair. In Salmonella paratyphi C (strain RKS4594), this protein is RNA polymerase-associated protein RapA.